A 79-amino-acid polypeptide reads, in one-letter code: Calcium/calmodulin-dependent protein kinase II inhibitor 2 (79 aa).

The interval 1–21 (MSEILPYSEDKMGRFGADPEG) is disordered. An inhibitory domain region spans residues 43-69 (KRPPKLGQIGRAKRVVIEDDRIDDVLK).

It belongs to the CAMK2N family. As to quaternary structure, interacts with CAMK2A and CAMK2B in the presence of Ca(2+)/calmodulin or after autophosphorylation.

It is found in the nucleus. It localises to the cytoplasm. Its subcellular location is the cytosol. The protein localises to the synapse. Its function is as follows. Potent and specific cellular inhibitor of CaM-kinase II (CAMK2). Traps Ca(2+)/calmodulin on CAMK2. The protein is Calcium/calmodulin-dependent protein kinase II inhibitor 2 (CAMK2N2) of Bos taurus (Bovine).